A 169-amino-acid polypeptide reads, in one-letter code: Mu-like prophage FluMu host-nuclease inhibitor protein gam (169 aa).

It to phage Mu protein gam.

Its function is as follows. Protects linear double-stranded DNA of Mu genome from exonuclease degradation. The protein is Mu-like prophage FluMu host-nuclease inhibitor protein gam of Haemophilus influenzae (strain ATCC 51907 / DSM 11121 / KW20 / Rd).